Consider the following 69-residue polypeptide: RICYLAPRDTQICAPGQEICYLKSWDDGSGSIKGKRLEFGCAATCPTVKPGIDIKCCSTDKCNPHPKLA.

Intrachain disulfides connect Cys3–Cys20, Cys13–Cys41, Cys45–Cys56, and Cys57–Cys62.

The protein belongs to the three-finger toxin family. Long-chain subfamily. Type II alpha-neurotoxin sub-subfamily. As to expression, expressed by the venom gland.

Its subcellular location is the secreted. In terms of biological role, binds with high affinity to muscular nicotinic acetylcholine receptors (nAChRs), whereas it binds with a low affinity to neuronal alpha-7/CHRNA7 nAChRs. This Laticauda colubrina (Yellow-lipped sea krait) protein is Alpha-elapitoxin-Lc2c.